A 228-amino-acid polypeptide reads, in one-letter code: Leucyl/phenylalanyl-tRNA--protein transferase (228 aa).

It belongs to the L/F-transferase family.

It is found in the cytoplasm. The enzyme catalyses N-terminal L-lysyl-[protein] + L-leucyl-tRNA(Leu) = N-terminal L-leucyl-L-lysyl-[protein] + tRNA(Leu) + H(+). It catalyses the reaction N-terminal L-arginyl-[protein] + L-leucyl-tRNA(Leu) = N-terminal L-leucyl-L-arginyl-[protein] + tRNA(Leu) + H(+). It carries out the reaction L-phenylalanyl-tRNA(Phe) + an N-terminal L-alpha-aminoacyl-[protein] = an N-terminal L-phenylalanyl-L-alpha-aminoacyl-[protein] + tRNA(Phe). Its function is as follows. Functions in the N-end rule pathway of protein degradation where it conjugates Leu, Phe and, less efficiently, Met from aminoacyl-tRNAs to the N-termini of proteins containing an N-terminal arginine or lysine. In Thiobacillus denitrificans (strain ATCC 25259 / T1), this protein is Leucyl/phenylalanyl-tRNA--protein transferase.